The following is a 73-amino-acid chain: Sec-independent protein translocase protein TatA (73 aa).

A helical transmembrane segment spans residues M1–G21. Residues M43–K73 are disordered. A compositionally biased stretch (basic and acidic residues) spans E60–K73.

Belongs to the TatA/E family. The Tat system comprises two distinct complexes: a TatABC complex, containing multiple copies of TatA, TatB and TatC subunits, and a separate TatA complex, containing only TatA subunits. Substrates initially bind to the TatABC complex, which probably triggers association of the separate TatA complex to form the active translocon.

Its subcellular location is the cell inner membrane. In terms of biological role, part of the twin-arginine translocation (Tat) system that transports large folded proteins containing a characteristic twin-arginine motif in their signal peptide across membranes. TatA could form the protein-conducting channel of the Tat system. The protein is Sec-independent protein translocase protein TatA of Laribacter hongkongensis (strain HLHK9).